We begin with the raw amino-acid sequence, 418 residues long: L-methionine/branched-chain amino acid exporter YjeH (418 aa).

Residues 1–15 (MSGLKQELGLAQGIG) are Periplasmic-facing. The chain crosses the membrane as a helical span at residues 16-36 (LLSTSLLGTGVFAVPALAALV). The Cytoplasmic portion of the chain corresponds to 37-41 (AGNNS). The helical transmembrane segment at 42 to 62 (LWAWPVLIILVFPIAIVFAIL) threads the bilayer. Residues 63-89 (GRHYPSAGGVAHFVGMAFGSRLERVTG) are Periplasmic-facing. Residues 90 to 110 (WLFLSVIPVGLPAALQIAAGF) form a helical membrane-spanning segment. Residues 111-113 (GQA) lie on the Cytoplasmic side of the membrane. The helical transmembrane segment at 114 to 134 (MFGWHSWQLLLAELGTLALVW) threads the bilayer. The Periplasmic portion of the chain corresponds to 135-147 (YIGTRGASSSANL). Residues 148-168 (QTVIAGLIVALIVAIWWAGDI) form a helical membrane-spanning segment. The Cytoplasmic portion of the chain corresponds to 169-182 (KPANIPFPAPGNIE). Residues 183–203 (LTGLFAALSVMFWCFVGLEAF) form a helical membrane-spanning segment. The Periplasmic segment spans residues 204–219 (AHLASEFKNPERDFPR). A helical transmembrane segment spans residues 220 to 240 (ALMIGLLLAGLVYWGCTVVVL). Topologically, residues 241 to 257 (HFDAYGEKMAAAASLPK) are cytoplasmic. The chain crosses the membrane as a helical span at residues 258 to 278 (IVVQLFGVGALWIACVIGYLA). At 279-317 (CFASLNIYIQSFARLVWSQAQHNPDHYLARLSSRHIPNN) the chain is on the periplasmic side. A helical transmembrane segment spans residues 318–338 (ALNAVLGCCVVSTLVIHALEI). Residues 339–341 (NLD) are Cytoplasmic-facing. A helical transmembrane segment spans residues 342 to 362 (ALIIYANGIFIMIYLLCMLAG). Over 363–378 (CKLLQGRYRLLAVVGG) the chain is Periplasmic. Residues 379 to 399 (LLCVLLLAMVGWKSLYALIML) traverse the membrane as a helical segment. At 400–418 (AGLWLLLPKRKTPENGITT) the chain is on the cytoplasmic side.

Belongs to the amino acid-polyamine-organocation (APC) superfamily. Amino acid efflux (AAE) (TC 2.A.3.13) family.

Its subcellular location is the cell inner membrane. The catalysed reaction is L-methionine(in) + H(+)(out) = L-methionine(out) + H(+)(in). It catalyses the reaction L-leucine(in) + H(+)(out) = L-leucine(out) + H(+)(in). The enzyme catalyses L-isoleucine(in) + H(+)(out) = L-isoleucine(out) + H(+)(in). It carries out the reaction L-valine(in) + H(+)(out) = L-valine(out) + H(+)(in). Its activity is regulated as follows. Efflux of L-methionine is inhibited by the proton ionophore carbonyl cyanide m-chlorophenylhydrazone (CCCP). Catalyzes the efflux of L-methionine, L-leucine, L-isoleucine and L-valine. Activity is dependent on electrochemical potential. The polypeptide is L-methionine/branched-chain amino acid exporter YjeH (yjeH) (Escherichia coli (strain K12)).